The chain runs to 493 residues: MSLRLTNTLTRRTEPFTPLTPGKASIYCCGVTVYDLCHLGHARSYINWDVLRRFLIWRGLEVTFVQNFTDIDDKILKRAAEQNSSMTEVSERNIDAFHQDMDALGILRPDRMPRATQCLDGIRSLIGELEAKGAAYSADGDVYFAVMKHAGYGKLSGRDLSEQQDNAAGRVADAEEARKQHPFDFALWKGAKPGEPSFPSPWGEGRPGWHIECSAMVRAELGDTIDIHLGGADLVFPHHENEIAQSEAATGKELARVWMHNGMVNVGGQKMSKSLGNFTTIRALLESGVSPMTLRLFVLQAHYRKPLDFTAEALEAAATGWKGLNAALGLGERYSDQLGWPSPAALSEDAIGPQTSPDAEALQALEQQFIGSMEDDLNSSGALAVLFDLAKPLRALANRLERGDEPGLPEADIRNLAPRWQLLRELAVVLGLRGETSGQSNMDDESIDATIAARKAAKAAKNYAEADRIRNELTAQGIELIDKPGGITEWIRS.

Residue C29 coordinates Zn(2+). Positions 31–41 match the 'HIGH' region motif; sequence VTVYDLCHLGH. 3 residues coordinate Zn(2+): C213, H238, and E242. A 'KMSKS' region motif is present at residues 270–274; sequence KMSKS. An ATP-binding site is contributed by K273.

The protein belongs to the class-I aminoacyl-tRNA synthetase family. Monomer. It depends on Zn(2+) as a cofactor.

It localises to the cytoplasm. It carries out the reaction tRNA(Cys) + L-cysteine + ATP = L-cysteinyl-tRNA(Cys) + AMP + diphosphate. The chain is Cysteine--tRNA ligase from Parasynechococcus marenigrum (strain WH8102).